The primary structure comprises 65 residues: RKPCGKNEVWTECTGCELKCGQDEKTPCALMCRPPSCECTPGRGMRRTHDGKCVPVSECPRKMPK.

5 disulfide bridges follow: Cys4/Cys37, Cys13/Cys32, Cys16/Cys28, Cys20/Cys59, and Cys39/Cys53. In terms of domain architecture, TIL spans 4-59 (CGKNEVWTECTGCELKCGQDEKTPCALMCRPPSCECTPGRGMRRTHDGKCVPVSEC).

It belongs to the serine protease inhibitor-like (TIL domain-containing) family.

It localises to the secreted. In terms of biological role, defends the organism against the host's proteinases. This Ascaris suum (Pig roundworm) protein is Chymotrypsin/elastase isoinhibitors 2 to 5.